The chain runs to 286 residues: Bifunctional protein FolD (286 aa).

NADP(+)-binding positions include 165–167 (GRS) and Ser190.

It belongs to the tetrahydrofolate dehydrogenase/cyclohydrolase family. In terms of assembly, homodimer.

The enzyme catalyses (6R)-5,10-methylene-5,6,7,8-tetrahydrofolate + NADP(+) = (6R)-5,10-methenyltetrahydrofolate + NADPH. It carries out the reaction (6R)-5,10-methenyltetrahydrofolate + H2O = (6R)-10-formyltetrahydrofolate + H(+). It participates in one-carbon metabolism; tetrahydrofolate interconversion. Functionally, catalyzes the oxidation of 5,10-methylenetetrahydrofolate to 5,10-methenyltetrahydrofolate and then the hydrolysis of 5,10-methenyltetrahydrofolate to 10-formyltetrahydrofolate. The protein is Bifunctional protein FolD of Burkholderia orbicola (strain MC0-3).